Here is a 282-residue protein sequence, read N- to C-terminus: 2-dehydro-3-deoxyphosphooctonate aldolase (282 aa).

It belongs to the KdsA family.

The protein localises to the cytoplasm. The enzyme catalyses D-arabinose 5-phosphate + phosphoenolpyruvate + H2O = 3-deoxy-alpha-D-manno-2-octulosonate-8-phosphate + phosphate. The protein operates within carbohydrate biosynthesis; 3-deoxy-D-manno-octulosonate biosynthesis; 3-deoxy-D-manno-octulosonate from D-ribulose 5-phosphate: step 2/3. Its pathway is bacterial outer membrane biogenesis; lipopolysaccharide biosynthesis. This chain is 2-dehydro-3-deoxyphosphooctonate aldolase, found in Shewanella pealeana (strain ATCC 700345 / ANG-SQ1).